The chain runs to 182 residues: Oligoribonuclease (182 aa).

The Exonuclease domain maps to 8–171 (LIWIDLEMTG…DDIRESIKEL (164 aa)). Tyr129 is a catalytic residue.

It belongs to the oligoribonuclease family.

Its subcellular location is the cytoplasm. Its function is as follows. 3'-to-5' exoribonuclease specific for small oligoribonucleotides. The protein is Oligoribonuclease (orn) of Haemophilus influenzae (strain ATCC 51907 / DSM 11121 / KW20 / Rd).